The primary structure comprises 67 residues: Protein AaeX (67 aa).

2 consecutive transmembrane segments (helical) span residues 3–23 (LFPV…ELLL) and 47–67 (PALF…RLFV).

It belongs to the AaeX family.

Its subcellular location is the cell membrane. The polypeptide is Protein AaeX (Escherichia coli O157:H7).